The following is a 94-amino-acid chain: Alpha-conotoxin Cp20.3 (94 aa).

An N-terminal signal peptide occupies residues 1–24 (MPKLAVVLLVLLILPLSYFDAAGG). Positions 25 to 45 (QAVQGDRRGNGLARYLQRGDR) are excised as a propeptide. A 4-carboxyglutamate; partial modification is found at E46. At E49 the chain carries 4-carboxyglutamate. Position 55 is a 4-hydroxyproline (P55). 4 cysteine pairs are disulfide-bonded: C63-C72, C68-C80, C73-C90, and C78-C92.

It belongs to the conotoxin D superfamily. In terms of assembly, hetero-, homo- or pseudo-homodimer (identical sequence, different post-translational modifications). In terms of tissue distribution, expressed by the venom duct.

Its subcellular location is the secreted. Its function is as follows. Alpha-D-conopeptides act on postsynaptic membranes, they bind to the nicotinic acetylcholine receptors (nAChR) and thus inhibit them. Through its two C-terminal domains, this homodimeric protein would bind to two nAChR allosteric sites, located outside the nAChR C-loop of the principal binding face and at the adjacent binding interface in a clockwise direction. This toxin specifically blocks mammalian neuronal nAChR of the alpha-7/CHRNA7 (IC(50)=0.25 nM), alpha-3-beta-2/CHRNA3-CHRNB2 (IC(50)=2.8 nM), and alpha-4-beta-2/CHRNA4-CHRNB2 (IC(50)=28.6 nM) subtypes. Has no effect on alpha-3-beta-4/CHRNA3-CHRNB4, alpha-4-beta-4/CHRNA4-CHRNB4 and alpha-1-beta-1-epsilon-delta/CHRNA1-CHRNB1-CHRNE-CHRND subtypes of nAChRs. This is Alpha-conotoxin Cp20.3 from Conus capitaneus (Captain cone).